The primary structure comprises 35 residues: Manganese peroxidase (35 aa).

Residues 1 to 11 are compositionally biased toward basic and acidic residues; the sequence is LSLLGHDERVT. The segment at 1–35 is disordered; that stretch reads LSLLGHDERVTPEPFDSVTAQNARGNQADVQSLPR. Polar residues predominate over residues 18–35; that stretch reads VTAQNARGNQADVQSLPR.

It belongs to the peroxidase family. It depends on heme b as a cofactor. Requires Ca(2+) as cofactor.

It catalyses the reaction 2 Mn(2+) + H2O2 + 2 H(+) = 2 Mn(3+) + 2 H2O. In terms of biological role, has manganese peroxidase activity. In Irpex lacteus (Milk-white toothed polypore), this protein is Manganese peroxidase.